Here is a 255-residue protein sequence, read N- to C-terminus: MLVMAGLGLYDERDVTLKTLDFAKKVDKIYAEFYTAILTGTTMEKIEGTLQKPITVLDREKVEYETNKLIDEAKDKDIMFLTAGDPMVATTHVDIAVEARKKGIEVVIINAPSIYSAIGITGLQLYKFGKTTSIVFPEPNYFPETPYDVIKDNLKLGYHTLCLLDIQADKERFMTANEGLDALLKIEEKRKENVISEETEVAVVARAGSINPGLYYGKIKDLLNYDFKSPLHCVIIPGKLHFMEEDALKYLFENI.

Residues L9, D85, V88, 113-114 (SI), L164, A207, and H232 contribute to the S-adenosyl-L-methionine site.

It belongs to the diphthine synthase family. As to quaternary structure, homodimer.

It carries out the reaction 2-[(3S)-amino-3-carboxypropyl]-L-histidyl-[translation elongation factor 2] + 3 S-adenosyl-L-methionine = diphthine-[translation elongation factor 2] + 3 S-adenosyl-L-homocysteine + 3 H(+). Its pathway is protein modification; peptidyl-diphthamide biosynthesis. S-adenosyl-L-methionine-dependent methyltransferase that catalyzes the trimethylation of the amino group of the modified target histidine residue in translation elongation factor 2 (EF-2), to form an intermediate called diphthine. The three successive methylation reactions represent the second step of diphthamide biosynthesis. This is Diphthine synthase from Methanococcus maripaludis (strain DSM 14266 / JCM 13030 / NBRC 101832 / S2 / LL).